Consider the following 512-residue polypeptide: Anaerobic nitric oxide reductase transcription regulator NorR (512 aa).

Residues Met190–Val419 form the Sigma-54 factor interaction domain. Residues Gly218–Glu225 and Ala281–Glu290 each bind ATP. A DNA-binding region (H-T-H motif) is located at residues Trp487–Lys506.

It participates in nitrogen metabolism; nitric oxide reduction. Functionally, required for the expression of anaerobic nitric oxide (NO) reductase, acts as a transcriptional activator for at least the norVW operon. Activation also requires sigma-54. In Aliivibrio fischeri (strain ATCC 700601 / ES114) (Vibrio fischeri), this protein is Anaerobic nitric oxide reductase transcription regulator NorR.